A 644-amino-acid chain; its full sequence is Protein FAM149B1 (644 aa).

Disordered regions lie at residues 392–490 (NQSD…NTLL), 551–575 (TFRS…RPGR), and 609–644 (GHFP…RPGL). The segment covering 395-404 (DCRDSEDKVS) has biased composition (basic and acidic residues). Polar residues predominate over residues 449–459 (PITSSVTQPIT). Polar residues predominate over residues 626–644 (QARSHNRGGSTARSSRPGL).

Belongs to the FAM149 family.

The protein is Protein FAM149B1 (fam149b1) of Danio rerio (Zebrafish).